The sequence spans 273 residues: HTH-type transcriptional activator RhaS (273 aa).

Residues 174–272 (YQLLDWLQNN…SQSPRDLRSQ (99 aa)) enclose the HTH araC/xylS-type domain. DNA-binding regions (H-T-H motif) lie at residues 191–212 (PELA…KNKT) and 239–262 (VTDI…KREF).

As to quaternary structure, binds DNA as a dimer.

It is found in the cytoplasm. Activates expression of the rhaBAD and rhaT operons. This Yersinia pestis bv. Antiqua (strain Angola) protein is HTH-type transcriptional activator RhaS.